Here is a 312-residue protein sequence, read N- to C-terminus: Olfactory receptor 2L8 (312 aa).

The Extracellular portion of the chain corresponds to 1–24 (MENYNQTSTDFILLGLFPPSRIDL). A glycan (N-linked (GlcNAc...) asparagine) is linked at Asn-5. Residues 25–48 (FFFILIVFIFLMALIGNLSMILLI) form a helical membrane-spanning segment. Residues 49–56 (FLDTHLHT) are Cytoplasmic-facing. The helical transmembrane segment at 57-78 (PMYFLLSQLSLIDLNYISTIVP) threads the bilayer. The Extracellular portion of the chain corresponds to 79–99 (KMASDFLHGNKSISFTGCGIQ). N-linked (GlcNAc...) asparagine glycosylation occurs at Asn-88. Cys-96 and Cys-188 are disulfide-bonded. A helical membrane pass occupies residues 100–119 (SFFFLALGGAEALLLASMAY). The Cytoplasmic portion of the chain corresponds to 120–138 (DRYIAICFPLHYLIRMSKR). Residues 139 to 157 (VCVLMITGSWIIGSINACA) form a helical membrane-spanning segment. Topologically, residues 158-194 (HTVYVLHIPYCRSRAINHFFCDVPAMVTLACMDTWVY) are extracellular. Residues 195 to 218 (EGTVFLSATIFLVFPFIGISCSYG) traverse the membrane as a helical segment. Residues 219-235 (QVLFAVYHMKSAEGRKK) lie on the Cytoplasmic side of the membrane. Residues 236–258 (AYLTCSTHLTVVTFYYAPFVYTY) form a helical membrane-spanning segment. Over 259-271 (LRPRSLRSPTEDK) the chain is Extracellular. The helical transmembrane segment at 272–291 (VLAVFYTILTPMLNPIIYSL) threads the bilayer. Over 292–312 (RNKEVMGALTRVSQRICSVKM) the chain is Cytoplasmic.

This sequence belongs to the G-protein coupled receptor 1 family.

Its subcellular location is the cell membrane. Odorant receptor. This chain is Olfactory receptor 2L8 (OR2L8), found in Homo sapiens (Human).